The chain runs to 241 residues: Probable transcriptional regulatory protein azo0574 (241 aa).

The disordered stretch occupies residues 1-21 (MAGHSKWANIQHRKGRQDAKR).

The protein belongs to the TACO1 family.

The protein resides in the cytoplasm. This Azoarcus sp. (strain BH72) protein is Probable transcriptional regulatory protein azo0574.